The sequence spans 127 residues: MSTPKELRYSEEHEWVKTEGDKVRIGITDFAQSELGDIVFVELPEVGDEIKADEPFGSVESVKTVSELYAPINGKVVEVNEDLEDSPEFVNESPYEKAWMIVVEPSDASEIENLMTAGQYEDMIKED.

The region spanning 22–104 (KVRIGITDFA…YEKAWMIVVE (83 aa)) is the Lipoyl-binding domain. Lys-63 bears the N6-lipoyllysine mark.

It belongs to the GcvH family. In terms of assembly, the glycine cleavage system is composed of four proteins: P, T, L and H. The cofactor is (R)-lipoate.

The glycine cleavage system catalyzes the degradation of glycine. The H protein shuttles the methylamine group of glycine from the P protein to the T protein. Its function is as follows. Is also involved in protein lipoylation via its role as an octanoyl/lipoyl carrier protein intermediate. In Bacillus licheniformis (strain ATCC 14580 / DSM 13 / JCM 2505 / CCUG 7422 / NBRC 12200 / NCIMB 9375 / NCTC 10341 / NRRL NRS-1264 / Gibson 46), this protein is Glycine cleavage system H protein.